Here is a 211-residue protein sequence, read N- to C-terminus: FMN-dependent NADH:quinone oxidoreductase 3 (211 aa).

17–19 (SFS) contributes to the FMN binding site.

The protein belongs to the azoreductase type 1 family. In terms of assembly, homodimer. The cofactor is FMN.

The enzyme catalyses 2 a quinone + NADH + H(+) = 2 a 1,4-benzosemiquinone + NAD(+). It catalyses the reaction N,N-dimethyl-1,4-phenylenediamine + anthranilate + 2 NAD(+) = 2-(4-dimethylaminophenyl)diazenylbenzoate + 2 NADH + 2 H(+). Its function is as follows. Quinone reductase that provides resistance to thiol-specific stress caused by electrophilic quinones. In terms of biological role, also exhibits azoreductase activity. Catalyzes the reductive cleavage of the azo bond in aromatic azo compounds to the corresponding amines. In Halalkalibacterium halodurans (strain ATCC BAA-125 / DSM 18197 / FERM 7344 / JCM 9153 / C-125) (Bacillus halodurans), this protein is FMN-dependent NADH:quinone oxidoreductase 3.